The sequence spans 270 residues: Methionine-rich protein (270 aa).

Positions 1–18 (MLSLWAIGLLGLLNQVEA) are cleaved as a signal peptide. Positions 31–52 (QRSAQFSSSGWGTSPAAQNPWS) are enriched in polar residues. The tract at residues 31–95 (QRSAQFSSSG…MPGSMPGAMP (65 aa)) is disordered. Over residues 56–95 (PMPNTNMPNMNTGSLPGSMPGAMPGSMPGAMPGSMPGAMP) the composition is skewed to low complexity.

Component of the acid-soluble organic matrix of calcified layers of the shell (at protein level).

Its subcellular location is the secreted. This is Methionine-rich protein from Lottia gigantea (Giant owl limpet).